The following is a 155-amino-acid chain: Dau c 1 isoallergen Dau c 1.0401 (155 aa).

It belongs to the BetVI family. In terms of assembly, monomer. As to expression, expressed in roots (at protein level). Expressed in roots.

This is Dau c 1 isoallergen Dau c 1.0401 from Daucus carota subsp. sativus (Carrot).